The chain runs to 90 residues: Large ribosomal subunit protein uL23c (90 aa).

It belongs to the universal ribosomal protein uL23 family. As to quaternary structure, part of the 50S ribosomal subunit.

The protein localises to the plastid. Its subcellular location is the chloroplast. In terms of biological role, binds to 23S rRNA. This chain is Large ribosomal subunit protein uL23c (rpl23), found in Tetradesmus obliquus (Green alga).